A 309-amino-acid polypeptide reads, in one-letter code: Transcription initiation factor IIB 1 (309 aa).

2 tandem repeats follow at residues 125–208 and 219–300.

Belongs to the TFIIB family.

Stabilizes TBP binding to an archaeal box-A promoter. Also responsible for recruiting RNA polymerase II to the pre-initiation complex (DNA-TBP-TFIIB). This chain is Transcription initiation factor IIB 1, found in Saccharolobus solfataricus (strain ATCC 35092 / DSM 1617 / JCM 11322 / P2) (Sulfolobus solfataricus).